The sequence spans 461 residues: NADP-specific glutamate dehydrogenase (461 aa).

The active site involves lysine 115.

This sequence belongs to the Glu/Leu/Phe/Val dehydrogenases family. As to quaternary structure, homohexamer.

It catalyses the reaction L-glutamate + NADP(+) + H2O = 2-oxoglutarate + NH4(+) + NADPH + H(+). This Penicillium chrysogenum (Penicillium notatum) protein is NADP-specific glutamate dehydrogenase (GDH).